The chain runs to 127 residues: Copper resistance protein C (127 aa).

The first 25 residues, 1–25 (MFAFRSIATTVVMVAASLASASAFA), serve as a signal peptide directing secretion. Residues histidine 26, methionine 65, methionine 68, methionine 71, methionine 76, and histidine 116 each coordinate Cu cation.

It belongs to the CopC family.

Its subcellular location is the periplasm. In terms of biological role, copper-binding protein involved in copper resistance. In Xanthomonas campestris pv. juglandis (Xanthomonas arboricola pv. juglandis), this protein is Copper resistance protein C.